The following is a 248-amino-acid chain: 5'-nucleotidase SurE (248 aa).

A divalent metal cation-binding residues include D8, D9, S39, and N91.

It belongs to the SurE nucleotidase family. It depends on a divalent metal cation as a cofactor.

Its subcellular location is the cytoplasm. It catalyses the reaction a ribonucleoside 5'-phosphate + H2O = a ribonucleoside + phosphate. Functionally, nucleotidase that shows phosphatase activity on nucleoside 5'-monophosphates. In Geotalea daltonii (strain DSM 22248 / JCM 15807 / FRC-32) (Geobacter daltonii), this protein is 5'-nucleotidase SurE.